Reading from the N-terminus, the 391-residue chain is Succinate--CoA ligase [ADP-forming] subunit beta (391 aa).

The 240-residue stretch at 9–248 (KDILRKFGVA…ISEEDPFEVE (240 aa)) folds into the ATP-grasp domain. ATP is bound by residues Lys50, 57–59 (GRG), Glu103, Met106, and Glu111. 2 residues coordinate Mg(2+): Asn203 and Asp217. Residues Asn268 and 325-327 (GIV) contribute to the substrate site.

This sequence belongs to the succinate/malate CoA ligase beta subunit family. In terms of assembly, heterotetramer of two alpha and two beta subunits. The cofactor is Mg(2+).

It catalyses the reaction succinate + ATP + CoA = succinyl-CoA + ADP + phosphate. The enzyme catalyses GTP + succinate + CoA = succinyl-CoA + GDP + phosphate. Its pathway is carbohydrate metabolism; tricarboxylic acid cycle; succinate from succinyl-CoA (ligase route): step 1/1. Succinyl-CoA synthetase functions in the citric acid cycle (TCA), coupling the hydrolysis of succinyl-CoA to the synthesis of either ATP or GTP and thus represents the only step of substrate-level phosphorylation in the TCA. The beta subunit provides nucleotide specificity of the enzyme and binds the substrate succinate, while the binding sites for coenzyme A and phosphate are found in the alpha subunit. The sequence is that of Succinate--CoA ligase [ADP-forming] subunit beta from Chlorobium luteolum (strain DSM 273 / BCRC 81028 / 2530) (Pelodictyon luteolum).